The following is a 422-amino-acid chain: Tyrosine--tRNA ligase (422 aa).

Tyr35 is an L-tyrosine binding site. Positions 40-49 (PTAASLHVGH) match the 'HIGH' region motif. L-tyrosine-binding residues include Tyr169 and Gln173. The 'KMSKS' region signature appears at 229-233 (KFGKT). ATP is bound at residue Lys232. An S4 RNA-binding domain is found at 352 to 418 (VRLAQLFADT…GKKSLASVAV (67 aa)).

Belongs to the class-I aminoacyl-tRNA synthetase family. TyrS type 1 subfamily. In terms of assembly, homodimer.

The protein resides in the cytoplasm. It carries out the reaction tRNA(Tyr) + L-tyrosine + ATP = L-tyrosyl-tRNA(Tyr) + AMP + diphosphate + H(+). Catalyzes the attachment of tyrosine to tRNA(Tyr) in a two-step reaction: tyrosine is first activated by ATP to form Tyr-AMP and then transferred to the acceptor end of tRNA(Tyr). This is Tyrosine--tRNA ligase from Kineococcus radiotolerans (strain ATCC BAA-149 / DSM 14245 / SRS30216).